Reading from the N-terminus, the 552-residue chain is MSQVYVNEKTGADSTDVSGSEQQPFQTPAFALFKNEDAKILVYKQLEDSEEFGYGEISASALKKAKKGAEGLKKKQEKQAKLQEEQRKHQDDAAKKFAEMDLISIKEDESLPQAKKIKLRTVQDNIGTRVVVQGWIHRLRLQKGLGFITLRDGTGFIQCILTGDLAKCKTTHELTLESTVTIKGVINKLPEGKSAPGGVELKVDYYEVVGLAPSGEEAFSNKVQENADPSLLLDQRHLALRGESLSAVMKVRSTLLQAIRRFFAEEGLLEVTPPCMVQTQVEGGSTLFKMDYYGEEAYLTQSSQLYLETCLPALGDVFCVQESFRAEKSHTRRHLSEYTHIESELGFIEFDDLLTHLERLITYVVKYVVEDPVAGPLIKQLNPNFVPPQMPFKRMEYIHALDWLNEHGIPNEDGEKFKFGDDIAEAAERKMTDTIGVPILLIRFPVEIKSFYMQKCADDPRVTESVDVLMPTVGEITGGSMRTYDNDELVAAIKREGLDLDSYYWFTDQRKYGTCPHGGYGLGTERILAWLCDRFTVRDCSLYPRFTGRCKP.

Residues 1–23 are disordered; it reads MSQVYVNEKTGADSTDVSGSEQQ. Polar residues predominate over residues 12 to 23; that stretch reads ADSTDVSGSEQQ.

It belongs to the class-II aminoacyl-tRNA synthetase family.

It is found in the cytoplasm. The enzyme catalyses tRNA(Asn) + L-asparagine + ATP = L-asparaginyl-tRNA(Asn) + AMP + diphosphate + H(+). The protein is Asparagine--tRNA ligase, cytoplasmic (DED81) of Debaryomyces hansenii (strain ATCC 36239 / CBS 767 / BCRC 21394 / JCM 1990 / NBRC 0083 / IGC 2968) (Yeast).